We begin with the raw amino-acid sequence, 294 residues long: Lipoyl synthase 1 (294 aa).

7 residues coordinate [4Fe-4S] cluster: C38, C43, C49, C64, C68, C71, and S279. Residues 50–268 (FAGGTATFLI…EEGQTRFGFL (219 aa)) enclose the Radical SAM core domain.

The protein belongs to the radical SAM superfamily. Lipoyl synthase family. It depends on [4Fe-4S] cluster as a cofactor.

The protein resides in the cytoplasm. The catalysed reaction is [[Fe-S] cluster scaffold protein carrying a second [4Fe-4S](2+) cluster] + N(6)-octanoyl-L-lysyl-[protein] + 2 oxidized [2Fe-2S]-[ferredoxin] + 2 S-adenosyl-L-methionine + 4 H(+) = [[Fe-S] cluster scaffold protein] + N(6)-[(R)-dihydrolipoyl]-L-lysyl-[protein] + 4 Fe(3+) + 2 hydrogen sulfide + 2 5'-deoxyadenosine + 2 L-methionine + 2 reduced [2Fe-2S]-[ferredoxin]. Its pathway is protein modification; protein lipoylation via endogenous pathway; protein N(6)-(lipoyl)lysine from octanoyl-[acyl-carrier-protein]: step 2/2. In terms of biological role, catalyzes the radical-mediated insertion of two sulfur atoms into the C-6 and C-8 positions of the octanoyl moiety bound to the lipoyl domains of lipoate-dependent enzymes, thereby converting the octanoylated domains into lipoylated derivatives. This is Lipoyl synthase 1 from Prochlorococcus marinus (strain SARG / CCMP1375 / SS120).